The chain runs to 522 residues: Lysine--tRNA ligase (522 aa).

The 'HIGH' region motif lies at 44-52; it reads PSGLPHIGT. Positions 290–294 match the 'KMSKS' region motif; it reads KISKS. K293 is an ATP binding site.

It belongs to the class-I aminoacyl-tRNA synthetase family.

The protein resides in the cytoplasm. It catalyses the reaction tRNA(Lys) + L-lysine + ATP = L-lysyl-tRNA(Lys) + AMP + diphosphate. The protein is Lysine--tRNA ligase of Rickettsia bellii (strain RML369-C).